The chain runs to 160 residues: Troponin C, skeletal muscle (160 aa).

EF-hand domains are found at residues 15–50 (EMIA…LGQN), 51–86 (PTRE…QLKE), 91–126 (KSEE…SGEP), and 127–160 (VSEE…ENIQ). Ca(2+) is bound by residues aspartate 28, aspartate 30, aspartate 34, glutamate 39, aspartate 64, aspartate 66, serine 68, threonine 70, glutamate 75, aspartate 104, asparagine 106, aspartate 108, glutamate 115, aspartate 140, asparagine 142, aspartate 144, lysine 146, and glutamate 151.

The protein belongs to the troponin C family.

Troponin is the central regulatory protein of striated muscle contraction. Tn consists of three components: Tn-I which is the inhibitor of actomyosin ATPase, Tn-T which contains the binding EF-hand for tropomyosin and Tn-C. The binding of calcium to Tn-C abolishes the inhibitory action of Tn on actin filaments. This is Troponin C, skeletal muscle from Anguilla anguilla (European freshwater eel).